The sequence spans 167 residues: ATP synthase subunit b (167 aa).

The helical transmembrane segment at 7–25 threads the bilayer; sequence SFLLAVSFVIFIYLIYRPA.

It belongs to the ATPase B chain family. F-type ATPases have 2 components, F(1) - the catalytic core - and F(0) - the membrane proton channel. F(1) has five subunits: alpha(3), beta(3), gamma(1), delta(1), epsilon(1). F(0) has three main subunits: a(1), b(2) and c(10-14). The alpha and beta chains form an alternating ring which encloses part of the gamma chain. F(1) is attached to F(0) by a central stalk formed by the gamma and epsilon chains, while a peripheral stalk is formed by the delta and b chains.

It is found in the cell inner membrane. In terms of biological role, f(1)F(0) ATP synthase produces ATP from ADP in the presence of a proton or sodium gradient. F-type ATPases consist of two structural domains, F(1) containing the extramembraneous catalytic core and F(0) containing the membrane proton channel, linked together by a central stalk and a peripheral stalk. During catalysis, ATP synthesis in the catalytic domain of F(1) is coupled via a rotary mechanism of the central stalk subunits to proton translocation. Functionally, component of the F(0) channel, it forms part of the peripheral stalk, linking F(1) to F(0). The sequence is that of ATP synthase subunit b from Rickettsia typhi (strain ATCC VR-144 / Wilmington).